The sequence spans 331 residues: Mycothiol acetyltransferase (331 aa).

Residue E33 participates in 1D-myo-inositol 2-(L-cysteinylamino)-2-deoxy-alpha-D-glucopyranoside binding. The segment covering 59–86 has biased composition (low complexity); sequence HAAEATAGSAASADPADPADPAAPADPA. Residues 59–89 form a disordered region; that stretch reads HAAEATAGSAASADPADPADPAAPADPADPA. 115–120 contacts acetyl-CoA; sequence RRGHGS. In terms of domain architecture, N-acetyltransferase spans 183–331; sequence LRLDTFEESR…DVQLRATERG (149 aa). E210, K249, and E261 together coordinate 1D-myo-inositol 2-(L-cysteinylamino)-2-deoxy-alpha-D-glucopyranoside. 265–267 is an acetyl-CoA binding site; sequence VAT. Y299 serves as a coordination point for 1D-myo-inositol 2-(L-cysteinylamino)-2-deoxy-alpha-D-glucopyranoside. 304–309 lines the acetyl-CoA pocket; it reads NAPALR.

This sequence belongs to the acetyltransferase family. MshD subfamily. As to quaternary structure, monomer.

The catalysed reaction is 1D-myo-inositol 2-(L-cysteinylamino)-2-deoxy-alpha-D-glucopyranoside + acetyl-CoA = mycothiol + CoA + H(+). Functionally, catalyzes the transfer of acetyl from acetyl-CoA to desacetylmycothiol (Cys-GlcN-Ins) to form mycothiol. This Brachybacterium faecium (strain ATCC 43885 / DSM 4810 / JCM 11609 / LMG 19847 / NBRC 14762 / NCIMB 9860 / 6-10) protein is Mycothiol acetyltransferase.